Reading from the N-terminus, the 377-residue chain is MGIAGTFLFMIVIGAAIGAVTNHLAIQMLFRPYRPYYLFGKRVPFTPGLIPKRRDELAKQMGLMVTNHLLTPEGIKKRLLSDTVKNQALLFAEQFTQKMAASEMTVHEALAAAGILNPQEKTDAWIDRFTDEKLSELYRKYEHRAIKDWLPDELQEKLDEKVPLAADYILKRSTDYFESEEGKDRLGNMIDDFLNSRGMLGSMVQMFLGNSSLADRVLPELLKFLRNEETKKLLADLLSQEWGKLKSYTLYEADEKWNAKDLLFSMKKRALAALQTAPFFECRLGDIISRYEGEITGTYAPKLLDAALGSIAAHLEDVLKRLRLEEVVKEQVDQFPVERLEEMVLSISKREFKMITYLGGLLGGIIGAIQALFVILF.

A run of 2 helical transmembrane segments spans residues 1–21 and 357–377; these read MGIA…GAVT and YLGG…VILF.

This sequence belongs to the UPF0754 family.

It is found in the cell membrane. In Bacillus velezensis (strain DSM 23117 / BGSC 10A6 / LMG 26770 / FZB42) (Bacillus amyloliquefaciens subsp. plantarum), this protein is UPF0754 membrane protein RBAM_010020.